Reading from the N-terminus, the 159-residue chain is Ribosome maturation factor RimP (159 aa).

Belongs to the RimP family.

It is found in the cytoplasm. In terms of biological role, required for maturation of 30S ribosomal subunits. The protein is Ribosome maturation factor RimP of Geobacter sulfurreducens (strain ATCC 51573 / DSM 12127 / PCA).